The chain runs to 627 residues: DNA mismatch repair protein MutL (627 aa).

Belongs to the DNA mismatch repair MutL/HexB family.

This protein is involved in the repair of mismatches in DNA. It is required for dam-dependent methyl-directed DNA mismatch repair. May act as a 'molecular matchmaker', a protein that promotes the formation of a stable complex between two or more DNA-binding proteins in an ATP-dependent manner without itself being part of a final effector complex. The chain is DNA mismatch repair protein MutL from Mesorhizobium japonicum (strain LMG 29417 / CECT 9101 / MAFF 303099) (Mesorhizobium loti (strain MAFF 303099)).